A 137-amino-acid polypeptide reads, in one-letter code: Probable 4-amino-4-deoxy-L-arabinose-phosphoundecaprenol flippase subunit ArnF (137 aa).

The Cytoplasmic portion of the chain corresponds to 1–3; the sequence is MNA. Residues 4 to 24 form a helical membrane-spanning segment; the sequence is LRGWLAALGSMLLASAAQLGM. The Periplasmic segment spans residues 25–44; the sequence is RWGMSRLPLPEAWAGQTPER. A helical transmembrane segment spans residues 45–65; that stretch reads AALLAVALAVAAYAASLLCWL. The Cytoplasmic portion of the chain corresponds to 66–76; sequence AALRHLPLGRA. Residues 77–97 traverse the membrane as a helical segment; that stretch reads YSLLSASYALVYLLAASLPAF. Residues 98-100 lie on the Periplasmic side of the membrane; sequence DET. A helical membrane pass occupies residues 101-121; that stretch reads FSTSKILGVGLVVLGVLTVNA. At 122–137 the chain is on the cytoplasmic side; sequence RRTAAAPAHHPSRKAP.

Belongs to the ArnF family. As to quaternary structure, heterodimer of ArnE and ArnF.

It localises to the cell inner membrane. The protein operates within bacterial outer membrane biogenesis; lipopolysaccharide biosynthesis. Translocates 4-amino-4-deoxy-L-arabinose-phosphoundecaprenol (alpha-L-Ara4N-phosphoundecaprenol) from the cytoplasmic to the periplasmic side of the inner membrane. The polypeptide is Probable 4-amino-4-deoxy-L-arabinose-phosphoundecaprenol flippase subunit ArnF (Pseudomonas aeruginosa (strain LESB58)).